The primary structure comprises 295 residues: Diaminopimelate epimerase (295 aa).

Positions 13, 46, and 66 each coordinate substrate. The active-site Proton donor is cysteine 75. Residues 76-77 (GN), asparagine 162, asparagine 195, and 213-214 (ER) each bind substrate. Residue cysteine 222 is the Proton acceptor of the active site. 223–224 (GT) is a substrate binding site.

The protein belongs to the diaminopimelate epimerase family. Homodimer.

Its subcellular location is the cytoplasm. It carries out the reaction (2S,6S)-2,6-diaminopimelate = meso-2,6-diaminopimelate. It functions in the pathway amino-acid biosynthesis; L-lysine biosynthesis via DAP pathway; DL-2,6-diaminopimelate from LL-2,6-diaminopimelate: step 1/1. Its function is as follows. Catalyzes the stereoinversion of LL-2,6-diaminopimelate (L,L-DAP) to meso-diaminopimelate (meso-DAP), a precursor of L-lysine and an essential component of the bacterial peptidoglycan. This is Diaminopimelate epimerase from Psychrobacter arcticus (strain DSM 17307 / VKM B-2377 / 273-4).